The chain runs to 349 residues: DNA-directed RNA polymerase subunit alpha (349 aa).

Positions 1 to 226 are alpha N-terminal domain (alpha-NTD); that stretch reads MLIAQRPTLV…GLFGLAQELN (226 aa). The alpha C-terminal domain (alpha-CTD) stretch occupies residues 241–349; the sequence is AALAADLALP…GAEFVETEQY (109 aa). The segment at 308-349 is disordered; it reads LKDSPPGFDPRQAVDTYGTDSYNPAFSDPSDDGAEFVETEQY. The segment covering 336-349 has biased composition (acidic residues); it reads PSDDGAEFVETEQY.

Belongs to the RNA polymerase alpha chain family. As to quaternary structure, homodimer. The RNAP catalytic core consists of 2 alpha, 1 beta, 1 beta' and 1 omega subunit. When a sigma factor is associated with the core the holoenzyme is formed, which can initiate transcription.

The catalysed reaction is RNA(n) + a ribonucleoside 5'-triphosphate = RNA(n+1) + diphosphate. DNA-dependent RNA polymerase catalyzes the transcription of DNA into RNA using the four ribonucleoside triphosphates as substrates. The sequence is that of DNA-directed RNA polymerase subunit alpha from Frankia alni (strain DSM 45986 / CECT 9034 / ACN14a).